Here is a 217-residue protein sequence, read N- to C-terminus: Neurotrophic factor BDNF precursor form (217 aa).

The propeptide occupies 1–108 (PMKEVSIRGQ…AANMSMRVRR (108 aa)). An N-linked (GlcNAc...) asparagine glycan is attached at Asn-101. 2 disulfide bridges follow: Cys-121-Cys-188 and Cys-166-Cys-217.

It belongs to the NGF-beta family.

The protein resides in the secreted. Promotes the survival of neuronal populations that are all located either in the central nervous system or directly connected to it. The polypeptide is Neurotrophic factor BDNF precursor form (BDNF) (Acrantophis dumerili (Dumeril's ground boa)).